A 287-amino-acid chain; its full sequence is Bifunctional protein FolD (287 aa).

NADP(+) is bound by residues 165–167, Thr-192, and Val-233; that span reads GRG.

This sequence belongs to the tetrahydrofolate dehydrogenase/cyclohydrolase family. Homodimer.

It catalyses the reaction (6R)-5,10-methylene-5,6,7,8-tetrahydrofolate + NADP(+) = (6R)-5,10-methenyltetrahydrofolate + NADPH. The catalysed reaction is (6R)-5,10-methenyltetrahydrofolate + H2O = (6R)-10-formyltetrahydrofolate + H(+). Its pathway is one-carbon metabolism; tetrahydrofolate interconversion. Functionally, catalyzes the oxidation of 5,10-methylenetetrahydrofolate to 5,10-methenyltetrahydrofolate and then the hydrolysis of 5,10-methenyltetrahydrofolate to 10-formyltetrahydrofolate. The protein is Bifunctional protein FolD of Cutibacterium acnes (strain DSM 16379 / KPA171202) (Propionibacterium acnes).